The following is a 98-amino-acid chain: Sec-independent protein translocase protein TatA (98 aa).

A helical membrane pass occupies residues 1–21 (MGAMSPWHWAIVALVVVILFG). The tract at residues 43–98 (VKEMQNDNSTPAPTAQSAPPPQSAPAELPVADTTTAPVTPPAPVQPQSQHTEPKSA) is disordered. A compositionally biased stretch (low complexity) spans 66–79 (APAELPVADTTTAP).

Belongs to the TatA/E family. The Tat system comprises two distinct complexes: a TatABC complex, containing multiple copies of TatA, TatB and TatC subunits, and a separate TatA complex, containing only TatA subunits. Substrates initially bind to the TatABC complex, which probably triggers association of the separate TatA complex to form the active translocon.

Its subcellular location is the cell membrane. In terms of biological role, part of the twin-arginine translocation (Tat) system that transports large folded proteins containing a characteristic twin-arginine motif in their signal peptide across membranes. TatA could form the protein-conducting channel of the Tat system. This is Sec-independent protein translocase protein TatA from Rhodococcus erythropolis (Arthrobacter picolinophilus).